Here is a 224-residue protein sequence, read N- to C-terminus: Urease accessory protein UreF (224 aa).

The protein belongs to the UreF family. In terms of assembly, ureD, UreF and UreG form a complex that acts as a GTP-hydrolysis-dependent molecular chaperone, activating the urease apoprotein by helping to assemble the nickel containing metallocenter of UreC. The UreE protein probably delivers the nickel.

Its subcellular location is the cytoplasm. In terms of biological role, required for maturation of urease via the functional incorporation of the urease nickel metallocenter. The protein is Urease accessory protein UreF of Pseudomonas fluorescens (strain ATCC BAA-477 / NRRL B-23932 / Pf-5).